The following is a 326-amino-acid chain: Putative HTH-type transcriptional regulator y4qH (326 aa).

The HTH luxR-type domain maps to 257-322 (AVQKIPALSL…VAAIKAISLG (66 aa)). Residues 281–300 (SWDIGVIMRISENTVNFHIK) constitute a DNA-binding region (H-T-H motif).

It belongs to the autoinducer-regulated transcriptional regulatory protein family.

The sequence is that of Putative HTH-type transcriptional regulator y4qH from Sinorhizobium fredii (strain NBRC 101917 / NGR234).